Reading from the N-terminus, the 256-residue chain is Trans-aconitate 2-methyltransferase (256 aa).

The protein belongs to the methyltransferase superfamily. Tam family.

It is found in the cytoplasm. It carries out the reaction trans-aconitate + S-adenosyl-L-methionine = (E)-3-(methoxycarbonyl)pent-2-enedioate + S-adenosyl-L-homocysteine. Catalyzes the S-adenosylmethionine monomethyl esterification of trans-aconitate. The protein is Trans-aconitate 2-methyltransferase of Rhizobium leguminosarum bv. trifolii (strain WSM2304).